A 67-amino-acid chain; its full sequence is Large ribosomal subunit protein bL32 (67 aa).

The segment covering 1–19 (MAVPKRKMSRSNTRARRSQ) has biased composition (basic residues). The interval 1-21 (MAVPKRKMSRSNTRARRSQWK) is disordered.

Belongs to the bacterial ribosomal protein bL32 family.

The sequence is that of Large ribosomal subunit protein bL32 from Arthrobacter sp. (strain FB24).